Consider the following 190-residue polypeptide: Prostaglandin-H2 D-isomerase (190 aa).

The N-terminal stretch at 1-22 is a signal peptide; it reads MATHHTLWMGLVLLGLLGGLQA. The N-linked (GlcNAc...) asparagine glycan is linked to N51. Catalysis depends on C65, which acts as the Nucleophile. N78 is a glycosylation site (N-linked (GlcNAc...) asparagine). Residues C89 and C186 are joined by a disulfide bond.

This sequence belongs to the calycin superfamily. Lipocalin family. As to quaternary structure, monomer.

The protein localises to the rough endoplasmic reticulum. Its subcellular location is the nucleus membrane. It is found in the golgi apparatus. The protein resides in the cytoplasm. It localises to the perinuclear region. The protein localises to the secreted. It catalyses the reaction prostaglandin H2 = prostaglandin D2. In terms of biological role, catalyzes the conversion of PGH2 to PGD2, a prostaglandin involved in smooth muscle contraction/relaxation and a potent inhibitor of platelet aggregation. Involved in a variety of CNS functions, such as sedation, NREM sleep and PGE2-induced allodynia, and may have an anti-apoptotic role in oligodendrocytes. Binds small non-substrate lipophilic molecules, including biliverdin, bilirubin, retinal, retinoic acid and thyroid hormone, and may act as a scavenger for harmful hydrophobic molecules and as a secretory retinoid and thyroid hormone transporter. Possibly involved in development and maintenance of the blood-brain, blood-retina, blood-aqueous humor and blood-testis barrier. It is likely to play important roles in both maturation and maintenance of the central nervous system and male reproductive system. Involved in PLA2G3-dependent maturation of mast cells. PLA2G3 is secreted by immature mast cells and acts on nearby fibroblasts upstream to PTDGS to synthesize PGD2, which in turn promotes mast cell maturation and degranulation via PTGDR. The polypeptide is Prostaglandin-H2 D-isomerase (PTGDS) (Macaca fuscata fuscata (Japanese macaque)).